The primary structure comprises 111 residues: Cytochrome bo(3) ubiquinol oxidase subunit 4 (111 aa).

Residues 1 to 17 (MSSAAHDNHGAGHGSLG) lie on the Cytoplasmic side of the membrane. A helical transmembrane segment spans residues 18–38 (SYAIGFVLSVILTAIPFYMVM). The Periplasmic portion of the chain corresponds to 39-46 (DGGFSRHA). The chain crosses the membrane as a helical span at residues 47-67 (TILTMVVLGLVQVVVHLICFL). Topologically, residues 68-80 (HMNMSSEGRWNVM) are cytoplasmic. Residues 81–101 (AFIFTVIVILLVVGLSLWIIF) traverse the membrane as a helical segment. The Periplasmic segment spans residues 102–111 (SADMLMMPMP).

It belongs to the cytochrome c oxidase bacterial subunit 4 family. In terms of assembly, heterooctamer of two A chains, two B chains, two C chains and two D chains.

It is found in the cell inner membrane. Its function is as follows. Cytochrome bo(3) ubiquinol terminal oxidase is the component of the aerobic respiratory chain of E.coli that predominates when cells are grown at high aeration. Has proton pump activity across the membrane in addition to electron transfer, pumping 2 protons/electron. This is Cytochrome bo(3) ubiquinol oxidase subunit 4 (cyoD) from Pseudomonas aeruginosa (strain ATCC 15692 / DSM 22644 / CIP 104116 / JCM 14847 / LMG 12228 / 1C / PRS 101 / PAO1).